The sequence spans 306 residues: Meiotically up-regulated gene 73 protein (306 aa).

Helical transmembrane passes span 28–48, 59–79, 103–123, 125–145, 154–174, 190–210, and 224–244; these read YWAVFAVFLLCAIVFPLVSIF, FFSILSLVSCLAYFTMACNYG, YIQWLINFPLIIVMLHWTVGV, ILEIAYVVCYVLFAIVCLLAA, WAYYGFSFVGYFIALAHSVVL, FLWSIVYLHVIWFLYYACWIL, and IFYSILDLFEFGFFGAAFSWM.

The protein belongs to the archaeal/bacterial/fungal opsin family.

It localises to the membrane. Has a role in meiosis. This is Meiotically up-regulated gene 73 protein (mug73) from Schizosaccharomyces pombe (strain 972 / ATCC 24843) (Fission yeast).